Here is a 108-residue protein sequence, read N- to C-terminus: Cell wall protein PGA48 (108 aa).

The first 17 residues, 1 to 17 (MFKFVIYLFTFIAFANA), serve as a signal peptide directing secretion. N-linked (GlcNAc...) asparagine glycosylation is found at Asn-18, Asn-41, and Asn-77. Residue Asn-84 is the site of GPI-anchor amidated asparagine attachment. Residues 85–108 (GASKLNLRSLAGAGLVAAIFIAFI) constitute a propeptide, removed in mature form.

Belongs to the SED1 family. The GPI-anchor is attached to the protein in the endoplasmic reticulum and serves to target the protein to the cell surface. There, the glucosamine-inositol phospholipid moiety is cleaved off and the GPI-modified mannoprotein is covalently attached via its lipidless GPI glycan remnant to the 1,6-beta-glucan of the outer cell wall layer.

The protein localises to the secreted. It localises to the cell wall. Its subcellular location is the membrane. Cell wall protein that plays a role in adaptation and resistance to cell wall stress. This is Cell wall protein PGA48 (PGA48) from Candida albicans (strain SC5314 / ATCC MYA-2876) (Yeast).